We begin with the raw amino-acid sequence, 999 residues long: Signal peptide, CUB and EGF-like domain-containing protein 2 (999 aa).

The signal sequence occupies residues 1-31; that stretch reads MGVAGRNRPGAAWAVLLLLLLLPPLLLLAGA. Positions 45–85 constitute an EGF-like 1; calcium-binding domain; it reads DVDECAQGLDDCHADALCQNTPTSYKCSCKPGYQGEGRQCE. 6 cysteine pairs are disulfide-bonded: C49/C62, C56/C71, C73/C84, C90/C102, C98/C111, and C113/C126. Residues 86–127 form the EGF-like 2; calcium-binding domain; that stretch reads DIDECGNELNGGCVHDCLNIPGNYRCTCFDGFMLAHDGHNCL. Positions 128 to 168 constitute an EGF-like 3; calcium-binding domain; sequence DVDECLENNGGCQHTCVNVMGSYECCCKEGFFLSDNQHTCI. EGF-like domains follow at residues 177–213, 217–252, and 286–321; these read CMNKDHGCSHICKEAPRGSVACECRPGFELAKNQRDC, CNHGNGGCQHSCDDTADGPECSCHPQYKMHTDGRSC, and CAVNNGGCDRTCKDTSTGVHCSCPVGFTLQLDGKTC. An EGF-like 7; calcium-binding domain is found at 323–363; the sequence is DIDECQTRNGGCDHFCKNIVGSFDCGCKKGFKLLTDEKSCQ. One can recognise an EGF-like 8; calcium-binding domain in the interval 364–402; it reads DVDECSLDRTCDHSCINHPGTFACACNRGYTLYGFTHCG. Cystine bridges form between C368-C378, C374-C387, C389-C401, C407-C418, C414-C427, and C429-C442. Positions 403-443 constitute an EGF-like 9; calcium-binding domain; the sequence is DTNECSINNGGCQQVCVNTVGSYECQCHPGYKLHWNKKDCV. N659 carries an N-linked (GlcNAc...) asparagine glycan. C809 and C835 are joined by a disulfide. The CUB domain maps to 809–921; that stretch reads CGGELGDFTG…RGFQVPYVTY (113 aa). Residues 847 to 856 are interaction with the cholesterol-anchor of SHH; sequence ILIVVPEIFL. A disulfide bridge connects residues C862 and C883.

As to quaternary structure, forms homooligomers. Forms heterooligomers with SCUBE1. Forms heterooligomers with SCUBE3. Interacts with SHH via the cholesterol anchor of the dually lipid-modified SHH (ShhNp). Interacts with PTCH1. Interacts with VEGFR2. Post-translationally, N-glycosylated. In terms of tissue distribution, expressed in a broad spectrum of adult tissues.

It is found in the secreted. Its subcellular location is the cell surface. In terms of biological role, lipid-binding protein required for SHH long-range signaling by binding to the dually lipid-modified SHH (ShhNp) and by promoting ShhNp mobilization, solubilization and release from the cell membrane. Acts by enhancing the proteolytic processing (shedding) of the lipid-modified N- and C- terminal of ShhNp at the cell surface. Synergizes with DISP1 to increase SHH secretion. Probable cell surface coreceptor for VEGFR2 involved in VEGFR2-mediated angiogenesis. This chain is Signal peptide, CUB and EGF-like domain-containing protein 2, found in Homo sapiens (Human).